We begin with the raw amino-acid sequence, 478 residues long: Dihydrolipoyl dehydrogenase (478 aa).

FAD is bound by residues 34–49 (EKYI…GGTC), Lys58, and Gly122. Cys49 and Cys54 are oxidised to a cystine. NAD(+)-binding positions include 188 to 192 (GAGVI), Glu211, Val245, and 276 to 279 (AVGR). Asp319 and Ala327 together coordinate FAD. His451 serves as the catalytic Proton acceptor.

The protein belongs to the class-I pyridine nucleotide-disulfide oxidoreductase family. As to quaternary structure, homodimer. FAD serves as cofactor.

The protein localises to the cytoplasm. It carries out the reaction N(6)-[(R)-dihydrolipoyl]-L-lysyl-[protein] + NAD(+) = N(6)-[(R)-lipoyl]-L-lysyl-[protein] + NADH + H(+). In terms of biological role, the branched-chain alpha-keto dehydrogenase complex catalyzes the overall conversion of alpha-keto acids to acyl-CoA and CO(2). It contains multiple copies of 3 enzymatic components: branched-chain alpha-keto acid decarboxylase (E1), lipoamide acyltransferase (E2) and lipoamide dehydrogenase (E3). Also acts in the glycine cleavage system. This chain is Dihydrolipoyl dehydrogenase (lpdG), found in Pseudomonas aeruginosa (strain ATCC 15692 / DSM 22644 / CIP 104116 / JCM 14847 / LMG 12228 / 1C / PRS 101 / PAO1).